The sequence spans 122 residues: MIQQQTYLNVADNSGARKLMCLRVLGTGNCRYGEIGDVIIAVVKDAIPNMPIKRSEIVRAVIVRTRQPVRRASGMSIRFDDNAAVIINNDGNPKGTRVFGPVARELRDKNYTKIVSLAPEVL.

It belongs to the universal ribosomal protein uL14 family. In terms of assembly, part of the 50S ribosomal subunit. Forms a cluster with proteins L3 and L19. In the 70S ribosome, L14 and L19 interact and together make contacts with the 16S rRNA in bridges B5 and B8.

Functionally, binds to 23S rRNA. Forms part of two intersubunit bridges in the 70S ribosome. The chain is Large ribosomal subunit protein uL14 from Rippkaea orientalis (strain PCC 8801 / RF-1) (Cyanothece sp. (strain PCC 8801)).